A 371-amino-acid polypeptide reads, in one-letter code: Aspartate-semialdehyde dehydrogenase (371 aa).

NADP(+) contacts are provided by residues 9–12, 37–38, and glutamine 73; these read RGMV and TS. Arginine 102 is a phosphate binding site. The Acyl-thioester intermediate role is filled by cysteine 135. Substrate is bound at residue glutamine 162. Residues 165–166 and proline 193 contribute to the NADP(+) site; that span reads SG. Glutamate 241 contacts substrate. Lysine 244 is a phosphate binding site. A substrate-binding site is contributed by arginine 268. The active-site Proton acceptor is histidine 275. Glutamine 351 provides a ligand contact to NADP(+).

The protein belongs to the aspartate-semialdehyde dehydrogenase family. As to quaternary structure, homodimer.

The catalysed reaction is L-aspartate 4-semialdehyde + phosphate + NADP(+) = 4-phospho-L-aspartate + NADPH + H(+). It functions in the pathway amino-acid biosynthesis; L-lysine biosynthesis via DAP pathway; (S)-tetrahydrodipicolinate from L-aspartate: step 2/4. It participates in amino-acid biosynthesis; L-methionine biosynthesis via de novo pathway; L-homoserine from L-aspartate: step 2/3. Its pathway is amino-acid biosynthesis; L-threonine biosynthesis; L-threonine from L-aspartate: step 2/5. Its function is as follows. Catalyzes the NADPH-dependent formation of L-aspartate-semialdehyde (L-ASA) by the reductive dephosphorylation of L-aspartyl-4-phosphate. In Neisseria meningitidis serogroup B (strain ATCC BAA-335 / MC58), this protein is Aspartate-semialdehyde dehydrogenase.